We begin with the raw amino-acid sequence, 201 residues long: Putative manganese efflux pump MntP (201 aa).

5 consecutive transmembrane segments (helical) span residues 6-26, 39-59, 105-125, 127-147, and 169-189; these read CLAVAVALAMDAFAVAIATGI, LAFHFGLFQALMPVAGWTLGL, LTLIMLAVATSIDALAVGLSL, VLGIDIVTPAIVIGVVCLLFT, and LAGGVVLIGIGLRILYEHGVF.

It belongs to the MntP (TC 9.B.29) family.

It localises to the cell inner membrane. In terms of biological role, probably functions as a manganese efflux pump. In Nitratidesulfovibrio vulgaris (strain ATCC 29579 / DSM 644 / CCUG 34227 / NCIMB 8303 / VKM B-1760 / Hildenborough) (Desulfovibrio vulgaris), this protein is Putative manganese efflux pump MntP.